The primary structure comprises 351 residues: S-adenosylmethionine:tRNA ribosyltransferase-isomerase (351 aa).

It belongs to the QueA family. Monomer.

It localises to the cytoplasm. It catalyses the reaction 7-aminomethyl-7-carbaguanosine(34) in tRNA + S-adenosyl-L-methionine = epoxyqueuosine(34) in tRNA + adenine + L-methionine + 2 H(+). Its pathway is tRNA modification; tRNA-queuosine biosynthesis. Its function is as follows. Transfers and isomerizes the ribose moiety from AdoMet to the 7-aminomethyl group of 7-deazaguanine (preQ1-tRNA) to give epoxyqueuosine (oQ-tRNA). The sequence is that of S-adenosylmethionine:tRNA ribosyltransferase-isomerase from Photobacterium profundum (strain SS9).